Consider the following 621-residue polypeptide: C4-dicarboxylate transport sensor protein DctB (621 aa).

Residues 1–26 are Cytoplasmic-facing; the sequence is MHHVRMVKLPAEASDPHALRSRARRS. A helical transmembrane segment spans residues 27 to 45; it reads WLVFAAVALVLLAAGLLLA. Over 46–320 the chain is Periplasmic; the sequence is RDYGRSQALA…PLAAGAREAQ (275 aa). Residues 321 to 338 traverse the membrane as a helical segment; sequence LLTLAALVPLLALAALLL. The Cytoplasmic portion of the chain corresponds to 339–621; the sequence is RRRQVVAMRS…TTFAVNLKKA (283 aa). Residues 412-621 enclose the Histidine kinase domain; sequence GVAHEINQPV…TTFAVNLKKA (210 aa). Position 415 is a phosphohistidine; by autocatalysis (His415).

In terms of processing, autophosphorylated.

Its subcellular location is the cell inner membrane. The enzyme catalyses ATP + protein L-histidine = ADP + protein N-phospho-L-histidine.. Functionally, member of the two-component regulatory system DctB/DctD involved in the transport of C4-dicarboxylates. DctB functions as a membrane-associated protein kinase that phosphorylates DctD in response to environmental signals. This is C4-dicarboxylate transport sensor protein DctB (dctB) from Rhizobium meliloti (strain 1021) (Ensifer meliloti).